A 183-amino-acid chain; its full sequence is Phosphopantetheine adenylyltransferase (183 aa).

T13 provides a ligand contact to substrate. ATP-binding positions include 13–14 (TF) and H21. Substrate-binding residues include K45, L81, and R95. ATP is bound by residues 96–98 (GLR), E106, and 131–137 (HQFISSR).

The protein belongs to the bacterial CoaD family. Homohexamer. Mg(2+) serves as cofactor.

Its subcellular location is the cytoplasm. The enzyme catalyses (R)-4'-phosphopantetheine + ATP + H(+) = 3'-dephospho-CoA + diphosphate. The protein operates within cofactor biosynthesis; coenzyme A biosynthesis; CoA from (R)-pantothenate: step 4/5. In terms of biological role, reversibly transfers an adenylyl group from ATP to 4'-phosphopantetheine, yielding dephospho-CoA (dPCoA) and pyrophosphate. In Rhodospirillum centenum (strain ATCC 51521 / SW), this protein is Phosphopantetheine adenylyltransferase.